A 336-amino-acid polypeptide reads, in one-letter code: tRNA N6-adenosine threonylcarbamoyltransferase (336 aa).

Residues histidine 114 and histidine 118 each contribute to the Fe cation site. Residues 136-140, aspartate 169, glycine 182, aspartate 186, and asparagine 275 contribute to the substrate site; that span reads LVSGG. Aspartate 301 lines the Fe cation pocket.

It belongs to the KAE1 / TsaD family. The cofactor is Fe(2+).

The protein resides in the cytoplasm. It carries out the reaction L-threonylcarbamoyladenylate + adenosine(37) in tRNA = N(6)-L-threonylcarbamoyladenosine(37) in tRNA + AMP + H(+). In terms of biological role, required for the formation of a threonylcarbamoyl group on adenosine at position 37 (t(6)A37) in tRNAs that read codons beginning with adenine. Is involved in the transfer of the threonylcarbamoyl moiety of threonylcarbamoyl-AMP (TC-AMP) to the N6 group of A37, together with TsaE and TsaB. TsaD likely plays a direct catalytic role in this reaction. The sequence is that of tRNA N6-adenosine threonylcarbamoyltransferase from Streptococcus pneumoniae serotype 4 (strain ATCC BAA-334 / TIGR4).